The primary structure comprises 1416 residues: Uveal autoantigen with coiled-coil domains and ankyrin repeats (1416 aa).

An N-acetylmethionine modification is found at M1. Residues 1–24 are disordered; the sequence is MKSLKSRLRRQDVPGPASSGAAAA. ANK repeat units lie at residues 38-66, 67-96, 100-129, 133-162, 166-195, and 199-228; these read LMKA…KLDV, EGRS…DITT, AGRN…PTEH, QGRT…SVNA, DGRT…DVNS, and QNRT…DISL. 2 coiled-coil regions span residues 286–374 and 438–1386; these read VKSH…NRFK and ENEI…IYRT. Residue K1035 forms a Glycyl lysine isopeptide (Lys-Gly) (interchain with G-Cter in SUMO2) linkage.

As to quaternary structure, component of the apoptosome complex, composed of APAF1, pro-caspase-9 and UACA. In the complex, it probably interacts directly with APAF1. Interacts with LGALS3, ARF6 and ACTB. Interacts with RAB39A. In terms of tissue distribution, highly expressed in skeletal muscle, heart, kidney and pancreas. Expressed in choroid, retina and epidermal melanocytes. Expressed in eye muscles and thyroid follicular cells.

The protein localises to the nucleus. Its subcellular location is the cytoplasm. It is found in the cytoskeleton. Its function is as follows. Regulates APAF1 expression and plays an important role in the regulation of stress-induced apoptosis. Promotes apoptosis by regulating three pathways, apoptosome up-regulation, LGALS3/galectin-3 down-regulation and NF-kappa-B inactivation. Regulates the redistribution of APAF1 into the nucleus after proapoptotic stress. Down-regulates the expression of LGALS3 by inhibiting NFKB1. In terms of biological role, modulates isoactin dynamics to regulate the morphological alterations required for cell growth and motility. Interaction with ARF6 may modulate cell shape and motility after injury. May be involved in multiple neurite formation. The sequence is that of Uveal autoantigen with coiled-coil domains and ankyrin repeats (UACA) from Homo sapiens (Human).